The primary structure comprises 202 residues: FMN-dependent NADH:quinone oxidoreductase (202 aa).

FMN is bound by residues serine 9, 15-17, 95-98, and 139-142; these read SVS, MYNF, and SRGG.

It belongs to the azoreductase type 1 family. In terms of assembly, homodimer. FMN is required as a cofactor.

It catalyses the reaction 2 a quinone + NADH + H(+) = 2 a 1,4-benzosemiquinone + NAD(+). It carries out the reaction N,N-dimethyl-1,4-phenylenediamine + anthranilate + 2 NAD(+) = 2-(4-dimethylaminophenyl)diazenylbenzoate + 2 NADH + 2 H(+). In terms of biological role, quinone reductase that provides resistance to thiol-specific stress caused by electrophilic quinones. Also exhibits azoreductase activity. Catalyzes the reductive cleavage of the azo bond in aromatic azo compounds to the corresponding amines. In Laribacter hongkongensis (strain HLHK9), this protein is FMN-dependent NADH:quinone oxidoreductase.